Here is a 100-residue protein sequence, read N- to C-terminus: Cysteine-rich venom protein VAR1 (100 aa).

The first 22 residues, 1 to 22 (MILLKLYLTLAAILCQSRGTTS), serve as a signal peptide directing secretion. The 41-residue stretch at 41–81 (NKHNDLRRTVDPPAKNMLKMSWDNIIAESAKRAALRCNQNE) folds into the SCP domain.

This sequence belongs to the CRISP family. Contains 8 disulfide bonds. Expressed by the venom gland.

It localises to the secreted. Its function is as follows. Blocks ryanodine receptors, and potassium channels. This is Cysteine-rich venom protein VAR1 from Varanus acanthurus (Ridge-tailed monitor).